The primary structure comprises 21 residues: Outer membrane protein P2 (21 aa).

As to quaternary structure, disulfide bond interactions within and between MOMP molecules and other components form high molecular-weight oligomers.

The protein localises to the cell outer membrane. Functionally, structural rigidity of the outer membrane of elementary bodies and porin forming, permitting diffusion of solutes through the intracellular reticulate body membrane. Binds carcinoembryonic antigen (CEA). The polypeptide is Outer membrane protein P2 (Glaesserella parasuis (Haemophilus parasuis)).